Here is a 235-residue protein sequence, read N- to C-terminus: MAKLTKRQKALEGKVDSLKLYAIDDAFKIVRDCATAKFDESIDVSVQLGIDAKKSDQVVRGAVVLPNGTGKTKRVAVFAQGAKAEEAKAAGADVVGMEDLAEQVKAGNLNFDVVIASPDTMRIVGTLGQILGPRGLMPNPKVGTVTPDVATAVKNAKAGQVQFRVDKAGIIHTTLGRRSFDGDKLKGNLQALIEALNKAKPATSKGIYLRKVAVSSTMGVGVRVDVASINAAAQG.

The protein belongs to the universal ribosomal protein uL1 family. As to quaternary structure, part of the 50S ribosomal subunit.

Its function is as follows. Binds directly to 23S rRNA. The L1 stalk is quite mobile in the ribosome, and is involved in E site tRNA release. In terms of biological role, protein L1 is also a translational repressor protein, it controls the translation of the L11 operon by binding to its mRNA. The polypeptide is Large ribosomal subunit protein uL1 (Methylibium petroleiphilum (strain ATCC BAA-1232 / LMG 22953 / PM1)).